The sequence spans 1358 residues: Protein STU1 (1358 aa).

2 disordered regions span residues 915-950 (FVAD…SHGF) and 970-990 (QPET…DESN). The segment covering 926–949 (DDTKKNGSDVVDHEEIRDHEESHG) has biased composition (basic and acidic residues). A compositionally biased stretch (acidic residues) spans 973–990 (TVDENVDPMEVDSPDESN).

The protein belongs to the CLASP family. In terms of assembly, interacts with microtubules.

The protein resides in the cytoplasm. It localises to the cytoskeleton. Its subcellular location is the nucleus. It is found in the spindle. Microtubule binding protein that promotes the stabilization of dynamic microtubules. Required for mitotic spindle formation. The sequence is that of Protein STU1 (STU1) from Kluyveromyces lactis (strain ATCC 8585 / CBS 2359 / DSM 70799 / NBRC 1267 / NRRL Y-1140 / WM37) (Yeast).